Reading from the N-terminus, the 205-residue chain is Small ribosomal subunit protein uS4 (205 aa).

The span at 1 to 12 (MSKRIQAKHKLD) shows a compositional bias: basic residues. A disordered region spans residues 1–49 (MSKRIQAKHKLDRRMGQNIWGRPKSPVNRREYGPGQHGQRRKGKMSDFG). Residues 94–155 (RRLDAVVYRA…SSRQLEIVIV (62 aa)) enclose the S4 RNA-binding domain.

This sequence belongs to the universal ribosomal protein uS4 family. Part of the 30S ribosomal subunit. Contacts protein S5. The interaction surface between S4 and S5 is involved in control of translational fidelity.

Functionally, one of the primary rRNA binding proteins, it binds directly to 16S rRNA where it nucleates assembly of the body of the 30S subunit. With S5 and S12 plays an important role in translational accuracy. This chain is Small ribosomal subunit protein uS4, found in Methylobacterium radiotolerans (strain ATCC 27329 / DSM 1819 / JCM 2831 / NBRC 15690 / NCIMB 10815 / 0-1).